The primary structure comprises 176 residues: Acireductone dioxygenase (176 aa).

4 residues coordinate Fe(2+): His91, His93, Glu97, and His136. 4 residues coordinate Ni(2+): His91, His93, Glu97, and His136.

The protein belongs to the acireductone dioxygenase (ARD) family. In terms of assembly, monomer. Fe(2+) is required as a cofactor. It depends on Ni(2+) as a cofactor.

The enzyme catalyses 1,2-dihydroxy-5-(methylsulfanyl)pent-1-en-3-one + O2 = 3-(methylsulfanyl)propanoate + CO + formate + 2 H(+). It catalyses the reaction 1,2-dihydroxy-5-(methylsulfanyl)pent-1-en-3-one + O2 = 4-methylsulfanyl-2-oxobutanoate + formate + 2 H(+). Its pathway is amino-acid biosynthesis; L-methionine biosynthesis via salvage pathway; L-methionine from S-methyl-5-thio-alpha-D-ribose 1-phosphate: step 5/6. Catalyzes 2 different reactions between oxygen and the acireductone 1,2-dihydroxy-3-keto-5-methylthiopentene (DHK-MTPene) depending upon the metal bound in the active site. Fe-containing acireductone dioxygenase (Fe-ARD) produces formate and 2-keto-4-methylthiobutyrate (KMTB), the alpha-ketoacid precursor of methionine in the methionine recycle pathway. Ni-containing acireductone dioxygenase (Ni-ARD) produces methylthiopropionate, carbon monoxide and formate, and does not lie on the methionine recycle pathway. The chain is Acireductone dioxygenase from Picosynechococcus sp. (strain ATCC 27264 / PCC 7002 / PR-6) (Agmenellum quadruplicatum).